A 139-amino-acid chain; its full sequence is Class I hydrophobin 1 (139 aa).

The signal sequence occupies residues 1–21; that stretch reads MFFRISTVFVVALAAFAAASP. Intrachain disulfides connect Cys-57-Cys-118, Cys-64-Cys-112, Cys-65-Cys-98, and Cys-119-Cys-132.

Belongs to the fungal hydrophobin family. Self-assembles to form functional amyloid fibrils called rodlets. Self-assembly into fibrillar rodlets occurs spontaneously at hydrophobic:hydrophilic interfaces and the rodlets further associate laterally to form amphipathic monolayers.

The protein localises to the secreted. It localises to the cell wall. In terms of biological role, aerial growth, conidiation, and dispersal of filamentous fungi in the environment rely upon a capability of their secreting small amphipathic proteins called hydrophobins (HPBs) with low sequence identity. Class I can self-assemble into an outermost layer of rodlet bundles on aerial cell surfaces, conferring cellular hydrophobicity that supports fungal growth, development and dispersal; whereas Class II form highly ordered films at water-air interfaces through intermolecular interactions but contribute nothing to the rodlet structure. Hah1 is a class I hydrophobin that is involved in aerial growth of mycelia, but does not play a role in pathogenesis. The sequence is that of Class I hydrophobin 1 from Heterobasidion annosum (Root rot fungus).